Here is a 137-residue protein sequence, read N- to C-terminus: Small ribosomal subunit protein uS11 (137 aa).

The span at 1–10 (MPPKSRSTGP) shows a compositional bias: polar residues. 2 disordered regions span residues 1–27 (MPPK…IPHG) and 116–137 (GTIS…RRRV). Basic residues predominate over residues 12–21 (KTQKTRRRDK).

Belongs to the universal ribosomal protein uS11 family. As to quaternary structure, part of the 30S ribosomal subunit. Interacts with proteins S7 and S18. Binds to IF-3.

Its function is as follows. Located on the platform of the 30S subunit, it bridges several disparate RNA helices of the 16S rRNA. Forms part of the Shine-Dalgarno cleft in the 70S ribosome. This Rhodococcus erythropolis (strain PR4 / NBRC 100887) protein is Small ribosomal subunit protein uS11.